A 387-amino-acid polypeptide reads, in one-letter code: MKWLLLLGLLALSECIVHKVPLVRKKSLRKNLIEKGLLQDYLKTHTPNLATKYFPKETFASVSTESLENYLDAEYFGTISIGTPPQEFTVIFDTGSSNLWVPSTYCSSLACFLHKRFNPDDSSTFQATSETLSITYGTGSMTGILGYDTVKVGNIEDTNQIFGLSKTEPGITFLVAPFDGILGLAYPSISASDATPVFDNMWNEGLVSEDLFSVYLSSNGEKGSMVMFGGIDSSYYTGSLNWVPVSHEGYWQITMDSITINGETIACADSCQAVVDTGTSLLAGPTSAISKIQSYIGASKNLLGENIISCSAIDSLPDIVFTINNVQYPLPASAYILKEDDDCLSGFDGMNLDTSYGELWILGDVFIRQYFTVFDRANNQVGLAAAA.

The signal sequence occupies residues 1-15 (MKWLLLLGLLALSEC). A propeptide spans 16-59 (IVHKVPLVRKKSLRKNLIEKGLLQDYLKTHTPNLATKYFPKETF) (activation peptide). One can recognise a Peptidase A1 domain in the interval 75–384 (YFGTISIGTP…DRANNQVGLA (310 aa)). Residue Asp-93 is part of the active site. An intrachain disulfide couples Cys-106 to Cys-111. At Ser-129 the chain carries Phosphoserine. A disulfide bridge links Cys-267 with Cys-271. Asp-276 is an active-site residue. The cysteines at positions 310 and 343 are disulfide-linked.

This sequence belongs to the peptidase A1 family.

It is found in the secreted. The catalysed reaction is Preferential cleavage: hydrophobic, preferably aromatic, residues in P1 and P1' positions. Cleaves 1-Phe-|-Val-2, 4-Gln-|-His-5, 13-Glu-|-Ala-14, 14-Ala-|-Leu-15, 15-Leu-|-Tyr-16, 16-Tyr-|-Leu-17, 23-Gly-|-Phe-24, 24-Phe-|-Phe-25 and 25-Phe-|-Tyr-26 bonds in the B chain of insulin.. In terms of biological role, shows particularly broad specificity; although bonds involving phenylalanine and leucine are preferred, many others are also cleaved to some extent. This Oryctolagus cuniculus (Rabbit) protein is Pepsin II-1.